Consider the following 153-residue polypeptide: Ribosomal RNA large subunit methyltransferase H (153 aa).

S-adenosyl-L-methionine-binding residues include Leu-71 and Gly-102.

It belongs to the RNA methyltransferase RlmH family. As to quaternary structure, homodimer.

Its subcellular location is the cytoplasm. The enzyme catalyses pseudouridine(1915) in 23S rRNA + S-adenosyl-L-methionine = N(3)-methylpseudouridine(1915) in 23S rRNA + S-adenosyl-L-homocysteine + H(+). Functionally, specifically methylates the pseudouridine at position 1915 (m3Psi1915) in 23S rRNA. This Anaeromyxobacter dehalogenans (strain 2CP-1 / ATCC BAA-258) protein is Ribosomal RNA large subunit methyltransferase H.